A 798-amino-acid chain; its full sequence is Penicillin-binding protein 1A (798 aa).

Residues 1-9 (MIKKIVTTC) are Cytoplasmic-facing. Residues 10–30 (FGLVLGLCVFGVGLVAIAILV) form a helical; Signal-anchor for type II membrane protein membrane-spanning segment. At 31-798 (TYPKLPSLDS…SKQPQLDSLF (768 aa)) the chain is on the periplasmic side. A transglycosylase region spans residues 50–218 (LTIYSADGEV…SAYNPIVNPE (169 aa)). Glu88 acts as the Proton donor; for transglycosylase activity in catalysis. The transpeptidase stretch occupies residues 414-700 (VVVQEPLLQA…GTIAVPVWVD (287 aa)). The active-site Acyl-ester intermediate; for transpeptidase activity is Ser461. The tract at residues 751 to 798 (SRRIREDKEAGAEDVERGAADEVRQEVQETPVLPSNTGSKQPQLDSLF) is disordered. Positions 753–777 (RIREDKEAGAEDVERGAADEVRQEV) are enriched in basic and acidic residues. Polar residues predominate over residues 783–798 (LPSNTGSKQPQLDSLF).

The protein in the N-terminal section; belongs to the glycosyltransferase 51 family. This sequence in the C-terminal section; belongs to the transpeptidase family.

Its subcellular location is the cell inner membrane. The enzyme catalyses [GlcNAc-(1-&gt;4)-Mur2Ac(oyl-L-Ala-gamma-D-Glu-L-Lys-D-Ala-D-Ala)](n)-di-trans,octa-cis-undecaprenyl diphosphate + beta-D-GlcNAc-(1-&gt;4)-Mur2Ac(oyl-L-Ala-gamma-D-Glu-L-Lys-D-Ala-D-Ala)-di-trans,octa-cis-undecaprenyl diphosphate = [GlcNAc-(1-&gt;4)-Mur2Ac(oyl-L-Ala-gamma-D-Glu-L-Lys-D-Ala-D-Ala)](n+1)-di-trans,octa-cis-undecaprenyl diphosphate + di-trans,octa-cis-undecaprenyl diphosphate + H(+). The catalysed reaction is Preferential cleavage: (Ac)2-L-Lys-D-Ala-|-D-Ala. Also transpeptidation of peptidyl-alanyl moieties that are N-acyl substituents of D-alanine.. The protein operates within cell wall biogenesis; peptidoglycan biosynthesis. Its function is as follows. Cell wall formation. Synthesis of cross-linked peptidoglycan from the lipid intermediates. The enzyme has a penicillin-insensitive transglycosylase N-terminal domain (formation of linear glycan strands) and a penicillin-sensitive transpeptidase C-terminal domain (cross-linking of the peptide subunits). This chain is Penicillin-binding protein 1A (mrcA), found in Neisseria cinerea.